An 87-amino-acid polypeptide reads, in one-letter code: Putative septation protein SpoVG (87 aa).

Belongs to the SpoVG family.

Could be involved in septation. This Agathobacter rectalis (strain ATCC 33656 / DSM 3377 / JCM 17463 / KCTC 5835 / VPI 0990) (Eubacterium rectale) protein is Putative septation protein SpoVG.